Reading from the N-terminus, the 222-residue chain is Urease accessory protein UreF (222 aa).

This sequence belongs to the UreF family. As to quaternary structure, ureD, UreF and UreG form a complex that acts as a GTP-hydrolysis-dependent molecular chaperone, activating the urease apoprotein by helping to assemble the nickel containing metallocenter of UreC. The UreE protein probably delivers the nickel.

The protein resides in the cytoplasm. Required for maturation of urease via the functional incorporation of the urease nickel metallocenter. In Hahella chejuensis (strain KCTC 2396), this protein is Urease accessory protein UreF.